A 428-amino-acid polypeptide reads, in one-letter code: Histidine--tRNA ligase (428 aa).

This sequence belongs to the class-II aminoacyl-tRNA synthetase family. Homodimer.

It localises to the cytoplasm. The enzyme catalyses tRNA(His) + L-histidine + ATP = L-histidyl-tRNA(His) + AMP + diphosphate + H(+). This is Histidine--tRNA ligase from Lactobacillus johnsonii (strain CNCM I-12250 / La1 / NCC 533).